The primary structure comprises 298 residues: Mitochondrial dicarboxylate transporter (298 aa).

Solcar repeat units follow at residues 11-95 (KNIK…LKEN), 103-195 (TNMA…FKNY), and 205-289 (SKNY…LKKH). Transmembrane regions (helical) follow at residues 17–37 (WWYG…LDLA), 58–76 (ILAN…AAVL), 105–126 (MAYL…GNFA), 170–189 (GWKP…VVTY), 211–231 (LTAS…ADVM), and 265–283 (WLPS…FFAI).

This sequence belongs to the mitochondrial carrier (TC 2.A.29) family. As to quaternary structure, homodimer. Binds to the TIM22 translocation complex during import.

The protein localises to the mitochondrion inner membrane. Its function is as follows. Mitochondrial dicarboxylic transporter catalyzing the exchange of dicarboxylic acids like malate and succinate for inorganic phosphate. Required for growth on ethanol and acetate. The polypeptide is Mitochondrial dicarboxylate transporter (DIC1) (Saccharomyces cerevisiae (strain ATCC 204508 / S288c) (Baker's yeast)).